We begin with the raw amino-acid sequence, 258 residues long: Regulatory protein RecX (258 aa).

It belongs to the RecX family.

The protein localises to the cytoplasm. Its function is as follows. Modulates RecA activity. This is Regulatory protein RecX from Streptococcus pneumoniae (strain JJA).